Consider the following 228-residue polypeptide: Uracil-DNA glycosylase (228 aa).

D64 acts as the Proton acceptor in catalysis.

This sequence belongs to the uracil-DNA glycosylase (UDG) superfamily. UNG family. As to quaternary structure, monomer.

Its subcellular location is the cytoplasm. The enzyme catalyses Hydrolyzes single-stranded DNA or mismatched double-stranded DNA and polynucleotides, releasing free uracil.. Its function is as follows. Excises uracil residues from the DNA which can arise as a result of misincorporation of dUMP residues by DNA polymerase or due to deamination of cytosine. The sequence is that of Uracil-DNA glycosylase from Escherichia coli O6:H1 (strain CFT073 / ATCC 700928 / UPEC).